Consider the following 1273-residue polypeptide: DNA-directed RNA polymerase subunit beta (1273 aa).

Residues alanine 1252 to serine 1273 are disordered.

Belongs to the RNA polymerase beta chain family. The RNAP catalytic core consists of 2 alpha, 1 beta, 1 beta' and 1 omega subunit. When a sigma factor is associated with the core the holoenzyme is formed, which can initiate transcription.

The enzyme catalyses RNA(n) + a ribonucleoside 5'-triphosphate = RNA(n+1) + diphosphate. Its function is as follows. DNA-dependent RNA polymerase catalyzes the transcription of DNA into RNA using the four ribonucleoside triphosphates as substrates. The protein is DNA-directed RNA polymerase subunit beta of Dehalococcoides mccartyi (strain CBDB1).